Reading from the N-terminus, the 652-residue chain is DNA ligase (652 aa).

NAD(+)-binding positions include 29–33, 78–79, and Glu107; these read DSDYD and SL. Catalysis depends on Lys109, which acts as the N6-AMP-lysine intermediate. Positions 130, 164, 278, and 302 each coordinate NAD(+). The Zn(2+) site is built by Cys395, Cys398, Cys413, and Cys418. A BRCT domain is found at 577–652; sequence NSDAALFGLT…IEDEDWLRQL (76 aa).

It belongs to the NAD-dependent DNA ligase family. LigA subfamily. The cofactor is Mg(2+). Requires Mn(2+) as cofactor.

The catalysed reaction is NAD(+) + (deoxyribonucleotide)n-3'-hydroxyl + 5'-phospho-(deoxyribonucleotide)m = (deoxyribonucleotide)n+m + AMP + beta-nicotinamide D-nucleotide.. In terms of biological role, DNA ligase that catalyzes the formation of phosphodiester linkages between 5'-phosphoryl and 3'-hydroxyl groups in double-stranded DNA using NAD as a coenzyme and as the energy source for the reaction. It is essential for DNA replication and repair of damaged DNA. The sequence is that of DNA ligase from Streptococcus pyogenes serotype M1.